A 37-amino-acid chain; its full sequence is Protease 2 large chain (37 aa).

Residues 1–14 (NDGNGRDSDPHDPG) show a composition bias toward basic and acidic residues. The disordered stretch occupies residues 1–37 (NDGNGRDSDPHDPGDWTTAGQCGLWQPARNSQHWTLV). Residues 28–37 (ARNSQHWTLV) show a composition bias toward polar residues.

The protein belongs to the peptidase S8 family. In terms of assembly, heterodimer of a large and a small chain.

It localises to the secreted. This is Protease 2 large chain from Achromobacter lyticus.